The primary structure comprises 473 residues: Iron transporter SMF3 (473 aa).

A run of 2 helical transmembrane segments spans residues 14 to 34 (FIGP…YATS) and 44 to 64 (TLLF…CLCV). Asparagine 87 carries an N-linked (GlcNAc...) asparagine glycan. 9 consecutive transmembrane segments (helical) span residues 97-117 (AIIA…QILF), 119-139 (IPLT…LMFY), 152-172 (FEFG…LELF), 198-218 (ALYI…LYLG), 257-277 (LIIS…IVAG), 297-317 (LLVH…MLCS), 352-372 (LIAI…GISD), 373-393 (ILNF…APLI), and 448-468 (VFVW…YLLG).

The protein belongs to the NRAMP family.

Its subcellular location is the vacuole membrane. It is found in the endoplasmic reticulum membrane. In terms of biological role, has a role in controlling the cellular iron ion levels. Mobilizes vacuolar stores of iron in conditions of low iron levels. In Saccharomyces cerevisiae (strain ATCC 204508 / S288c) (Baker's yeast), this protein is Iron transporter SMF3 (SMF3).